The primary structure comprises 371 residues: Trans-enoyl reductase calK (371 aa).

51–54 contributes to the NADP(+) binding site; it reads NDHK. 145-152 lines the substrate pocket; the sequence is WSTISLAF. NADP(+)-binding positions include 181-184, 204-207, Y222, and 269-270; these read GTAS, SNQS, and LE. Substrate is bound at residue 289–293; it reads GFQVL. An NADP(+)-binding site is contributed by 359–360; that stretch reads VR.

Belongs to the zinc-containing alcohol dehydrogenase family. As to quaternary structure, monomer.

Its pathway is secondary metabolite biosynthesis. Functionally, trans-enoyl reductase; part of the gene cluster that mediates the biosynthesis of calbistrin A and related compounds. Calbistrin A is a secondary metabolite with an interesting structure that was recently found to have bioactivity against leukemia cells. It consists of two polyketides linked by an ester bond: a bicyclic decalin containing polyketide and a linear 12 carbon dioic acid structure. The polyketide synthase calA is probably responsible for forming the decalin moiety. Because calA lacks a designated enoylreductase (ER) domain, the required activity is provided by the trans-enoyl reductase calK. Following release from the PKS, calF then probably catalyzes the oxidation and the subsequent Diels Alder cycloisomerization that lead to the formation of the decalin moiety. The decalin polyketide backbone includes two C-methyl groups, at C7 and C11 in backbone, of which the C7 position is probably methylated by the methyltransferase domain of calA. A candidate for adding the methyl group at C11, if not done by CalA, is the cluster methyltransferase calH. Several additional tailoring enzymes within the cluster could be involved in the modification of the decalin polyketide product. Those include the 3 cytochrome P450 monooxygenases CalE, CalG and CalL, of which one might be responsible for the introduction of the extra hydroxyl group attached to the backbone of the decalin moiety, at position C9 in the backbone, that allows for attachment of the linear moiety. One tailoring enzyme activity that is expected to be involved in biosynthesis of calbistrin is an acyltransferase for connecting the two polyketide synthase products, and which could be performed by the cluster acyltransferase calJ. The enzyme responsible for the biosynthesis of the linear moiety, probably a second PKS, has not been identified yet. The sequence is that of Trans-enoyl reductase calK from Penicillium decumbens.